Reading from the N-terminus, the 154-residue chain is Myoglobin (154 aa).

Residues 2-148 (GLSDGEWQSV…FRNDIAAKYK (147 aa)) enclose the Globin domain. Ser-4 is subject to Phosphoserine. Residue His-65 participates in nitrite binding. Residue His-65 coordinates O2. Thr-68 bears the Phosphothreonine mark. Heme b is bound at residue His-94.

Belongs to the globin family. In terms of assembly, monomeric.

It localises to the cytoplasm. It is found in the sarcoplasm. It carries out the reaction Fe(III)-heme b-[protein] + nitric oxide + H2O = Fe(II)-heme b-[protein] + nitrite + 2 H(+). The catalysed reaction is H2O2 + AH2 = A + 2 H2O. Functionally, monomeric heme protein which primary function is to store oxygen and facilitate its diffusion within muscle tissues. Reversibly binds oxygen through a pentacoordinated heme iron and enables its timely and efficient release as needed during periods of heightened demand. Depending on the oxidative conditions of tissues and cells, and in addition to its ability to bind oxygen, it also has a nitrite reductase activity whereby it regulates the production of bioactive nitric oxide. Under stress conditions, like hypoxia and anoxia, it also protects cells against reactive oxygen species thanks to its pseudoperoxidase activity. This chain is Myoglobin (MB), found in Nycticebus coucang (Slow loris).